The primary structure comprises 90 residues: Antitoxin epsilon (90 aa).

Belongs to the epsilon antitoxin family. In terms of assembly, in the presence of the zeta toxin, forms an inactive PezA(2)PezT(2) heterotetramer. The heterotetramer is still able to bind the zeta toxin substrate UNAG.

Its function is as follows. Antitoxin component of a type II toxin-antitoxin (TA) system. Neutralizes the toxic effect of cognate zeta toxin. Part of a postsegregational killing (PSK) system involved in the killing of plasmid-free cells. Continuous synthesis of the epsilon antitoxin is required to counteract the zeta toxin. The polypeptide is Antitoxin epsilon (Streptococcus pyogenes).